The following is a 321-amino-acid chain: D-alanine--D-alanine ligase (321 aa).

Residues Arg121 to Lys315 enclose the ATP-grasp domain. Met148–Gln199 lines the ATP pocket. Glu268, Glu282, and Asn284 together coordinate Mg(2+).

It belongs to the D-alanine--D-alanine ligase family. It depends on Mg(2+) as a cofactor. Mn(2+) is required as a cofactor.

The protein resides in the cytoplasm. The catalysed reaction is 2 D-alanine + ATP = D-alanyl-D-alanine + ADP + phosphate + H(+). The protein operates within cell wall biogenesis; peptidoglycan biosynthesis. Functionally, cell wall formation. This is D-alanine--D-alanine ligase from Rickettsia typhi (strain ATCC VR-144 / Wilmington).